The chain runs to 353 residues: UPF0283 membrane protein YcjF (353 aa).

Basic and acidic residues predominate over residues 1-19 (MSEPLKPRIDFAEPLKEES). The disordered stretch occupies residues 1–29 (MSEPLKPRIDFAEPLKEESTSTFKAQQTF). The segment covering 20-29 (TSTFKAQQTF) has biased composition (polar residues). 3 consecutive transmembrane segments (helical) span residues 70–90 (MVLG…IQWT), 100–120 (AALG…GSVI), and 213–233 (ESTL…FIAW).

Belongs to the UPF0283 family.

The protein localises to the cell inner membrane. The protein is UPF0283 membrane protein YcjF of Salmonella arizonae (strain ATCC BAA-731 / CDC346-86 / RSK2980).